The primary structure comprises 90 residues: uncharacterized protein (90 aa).

Residues 13 to 34 (APEGMGPHHAASSSHHSAQHHH) form a disordered region. Residues 52 to 72 (YKMWFLYALILALIFGVFMWW) traverse the membrane as a helical segment.

The protein resides in the host membrane. This is an uncharacterized protein from Invertebrate iridescent virus 3 (IIV-3).